The primary structure comprises 336 residues: Lipoyl synthase (336 aa).

[4Fe-4S] cluster is bound by residues Cys-81, Cys-86, Cys-92, Cys-107, Cys-111, Cys-114, and Ser-323. The Radical SAM core domain occupies 93–312 (FGHGTATFMI…EDYGYELGFS (220 aa)).

The protein belongs to the radical SAM superfamily. Lipoyl synthase family. The cofactor is [4Fe-4S] cluster.

The protein resides in the cytoplasm. It carries out the reaction [[Fe-S] cluster scaffold protein carrying a second [4Fe-4S](2+) cluster] + N(6)-octanoyl-L-lysyl-[protein] + 2 oxidized [2Fe-2S]-[ferredoxin] + 2 S-adenosyl-L-methionine + 4 H(+) = [[Fe-S] cluster scaffold protein] + N(6)-[(R)-dihydrolipoyl]-L-lysyl-[protein] + 4 Fe(3+) + 2 hydrogen sulfide + 2 5'-deoxyadenosine + 2 L-methionine + 2 reduced [2Fe-2S]-[ferredoxin]. It functions in the pathway protein modification; protein lipoylation via endogenous pathway; protein N(6)-(lipoyl)lysine from octanoyl-[acyl-carrier-protein]: step 2/2. Catalyzes the radical-mediated insertion of two sulfur atoms into the C-6 and C-8 positions of the octanoyl moiety bound to the lipoyl domains of lipoate-dependent enzymes, thereby converting the octanoylated domains into lipoylated derivatives. The polypeptide is Lipoyl synthase (Stenotrophomonas maltophilia (strain K279a)).